We begin with the raw amino-acid sequence, 81 residues long: Cytochrome b559 subunit alpha (81 aa).

Residues 21–35 (VIHSITIPALFIAGW) traverse the membrane as a helical segment. Histidine 23 is a heme binding site.

It belongs to the PsbE/PsbF family. As to quaternary structure, heterodimer of an alpha subunit and a beta subunit. PSII is composed of 1 copy each of membrane proteins PsbA, PsbB, PsbC, PsbD, PsbE, PsbF, PsbH, PsbI, PsbJ, PsbK, PsbL, PsbM, PsbT, PsbX, PsbY, PsbZ, Psb30/Ycf12, at least 3 peripheral proteins of the oxygen-evolving complex and a large number of cofactors. It forms dimeric complexes. Heme b is required as a cofactor.

The protein localises to the plastid. Its subcellular location is the chloroplast thylakoid membrane. Its function is as follows. This b-type cytochrome is tightly associated with the reaction center of photosystem II (PSII). PSII is a light-driven water:plastoquinone oxidoreductase that uses light energy to abstract electrons from H(2)O, generating O(2) and a proton gradient subsequently used for ATP formation. It consists of a core antenna complex that captures photons, and an electron transfer chain that converts photonic excitation into a charge separation. The sequence is that of Cytochrome b559 subunit alpha from Tetradesmus obliquus (Green alga).